A 678-amino-acid chain; its full sequence is Inositol-trisphosphate 3-kinase C (678 aa).

Disordered regions lie at residues 26–128 (LEAL…RRNS) and 151–300 (DLQS…LDLS). A compositionally biased stretch (gly residues) spans 44–58 (PGAGGPTGRPEGGGP). 2 stretches are compositionally biased toward basic and acidic residues: residues 61 to 76 (WIEE…RTDL) and 107 to 116 (EKPRQNKELD). Ser160 is modified (phosphoserine). 2 stretches are compositionally biased toward basic and acidic residues: residues 173 to 196 (ELDR…DNLR) and 220 to 236 (SGKE…HDTD). A Nuclear export signal motif is present at residues 318–326 (LCPVPRLII). Residues 328-380 (PETPEPEAQPVGPQSRIEGGTGGFSSASSFDESEDDLVAGGGGTSDPEDRAGS) are disordered. Thr330 carries the post-translational modification Phosphothreonine. Residue Ser398 is modified to Phosphoserine. ATP contacts are provided by residues Lys426, 466 to 468 (EDL), and Asp479. Residues Lys481, 502–508 (RKDMYEK), and 529–536 (KPRYMQWR) contribute to the substrate site. Residues 504-512 (DMYEKMVAV) are calmodulin-binding. Residues Lys553 and Asp633 each coordinate ATP. Position 636 (Lys636) interacts with substrate.

Belongs to the inositol phosphokinase (IPK) family.

The protein localises to the nucleus. Its subcellular location is the cytoplasm. The enzyme catalyses 1D-myo-inositol 1,4,5-trisphosphate + ATP = 1D-myo-inositol 1,3,4,5-tetrakisphosphate + ADP + H(+). With respect to regulation, activated by calcium/calmodulin. Inhibited by high concentrations of the substrate Ins(1,2,4)P3, and allosterically activated by the product Ins(1,3,4,5)P4. Functionally, catalyzes the phosphorylation of 1D-myo-inositol 1,4,5-trisphosphate (InsP3) into 1D-myo-inositol 1,3,4,5-tetrakisphosphate and participates to the regulation of calcium homeostasis. Can phosphorylate inositol 2,4,5-triphosphate to inositol 2,4,5,6-tetraphosphate. The sequence is that of Inositol-trisphosphate 3-kinase C (Itpkc) from Mus musculus (Mouse).